We begin with the raw amino-acid sequence, 986 residues long: Probable serine/threonine-protein kinase DDB_G0272092 (986 aa).

One can recognise a C2 domain in the interval Met-1–Tyr-107. Asp-22, Asp-28, Asp-76, Asp-78, Ser-81, and Asp-84 together coordinate Ca(2+). ANK repeat units lie at residues Pro-137–Ile-167, Glu-171–Ile-201, His-205–Asp-238, Leu-242–His-274, Thr-278–Ile-307, and Pro-312–Glu-344. The 64-residue stretch at Glu-333 to Pro-396 folds into the SAM domain. Low complexity predominate over residues His-412–Asn-438. Disordered stretches follow at residues His-412–Thr-520 and Thr-532–Pro-574. The segment covering Asp-439–Ser-448 has biased composition (polar residues). A compositionally biased stretch (low complexity) spans Gln-454–Asn-464. A compositionally biased stretch (polar residues) spans Val-465–Leu-476. Composition is skewed to low complexity over residues Asn-493–Thr-520 and Thr-546–Pro-571. Residues Leu-601–Asn-870 enclose the Protein kinase domain. ATP contacts are provided by residues Leu-607 to Val-615 and Lys-628. The Proton acceptor role is filled by Asp-722. Composition is skewed to low complexity over residues Asp-901 to Asn-913 and Ser-928 to Asn-947. Residues Asp-901–Lys-986 form a disordered region. Composition is skewed to polar residues over residues Ile-948–Lys-959 and Leu-969–Pro-978.

The protein belongs to the protein kinase superfamily. TKL Ser/Thr protein kinase family. It depends on Ca(2+) as a cofactor.

The catalysed reaction is L-seryl-[protein] + ATP = O-phospho-L-seryl-[protein] + ADP + H(+). It catalyses the reaction L-threonyl-[protein] + ATP = O-phospho-L-threonyl-[protein] + ADP + H(+). This chain is Probable serine/threonine-protein kinase DDB_G0272092, found in Dictyostelium discoideum (Social amoeba).